Reading from the N-terminus, the 383-residue chain is RNA-binding motif, single-stranded-interacting protein 2 (383 aa).

The residue at position 1 (Met-1) is an N-acetylmethionine. Residues 28–56 (QMAPPSPRNSTPNSSGGGGGGSGGNDQLS) are disordered. Over residues 42-51 (SGGGGGGSGG) the composition is skewed to gly residues. 2 RRM domains span residues 58-131 (TNLY…MAKQ) and 137-222 (TNLY…FADG). Ser-108 is modified (phosphoserine). A Phosphoserine modification is found at Ser-287. A disordered region spans residues 352–383 (SSVSAEESNGQQNQLAVEPPSDHGVYPFQFSK).

It is found in the nucleus. The protein is RNA-binding motif, single-stranded-interacting protein 2 (Rbms2) of Mus musculus (Mouse).